The primary structure comprises 490 residues: Tegument protein VP16 (490 aa).

The segment at 12–35 (MNADGASPPPPRPAGGPKNTPAAP) is disordered. A phosphoserine mark is found at Ser-18, Ser-353, Ser-411, and Ser-452. Residues 411–490 (STAPPTDVSL…DALGIDEYGG (80 aa)) form a transcriptional activation region.

The protein belongs to the herpesviridae tegument protein VP16 protein family. Interacts with tegument protein VP22. Interacts with gH (via C-terminus). Interacts with the virion host shutoff protein (vhs). Interacts with VP11/12. Associates with the VP16-induced complex; binding to host HCFC1 activates VP16 for association with the octamer motif-binding host protein POU2F1, to form a multiprotein-DNA complex responsible for activating transcription of the viral immediate early genes. Interacts with host P-TEFb; this interaction recruits P-TEFb to the viral alpha-gene promoters and overcomes transcriptional inhibition by ICP22 and promotes transcription of IE genes.

It localises to the virion tegument. The protein resides in the host nucleus. Functionally, in the early stage of viral replication, acts as a transcriptional activator of immediate-early (IE) gene products (alpha-genes), which is released by invading virions. Recruits P-TEFb to the viral alpha-gene promoters and overcomes transcriptional inhibition by ICP22 to promote transcription of IE genes. VP16-induced complex represents a regulatory switch: when it is on, it promotes IE-gene expression and thus lytic infection, and when it is off, it limits IE-gene transcription favoring latent infection. Acts as a key activator of lytic infection by initiating the lytic program through the assembly of the transcriptional regulatory VP16-induced complex composed of VP16 and two cellular factors, HCFC1 and POU2F1. This complex recognizes the core motif 'TAATGARAT' in alpha-gene promoters. In the late stage of viral replication, VP16, as a tegument, is involved in viral assembly. May play a role in the aggregation of tegument proteins around nucleocapsids during virus morphogenesis. This chain is Tegument protein VP16, found in Human herpesvirus 1 (strain 17) (HHV-1).